The primary structure comprises 215 residues: Putative lipoprotein NMB1124/NMB1162 (215 aa).

The N-terminal stretch at 1 to 16 (MKPLILGLAAVLALSA) is a signal peptide. Residue C17 is the site of N-palmitoyl cysteine attachment. A lipid anchor (S-diacylglycerol cysteine) is attached at C17.

The protein localises to the cell membrane. This chain is Putative lipoprotein NMB1124/NMB1162, found in Neisseria meningitidis serogroup B (strain ATCC BAA-335 / MC58).